The chain runs to 520 residues: Developmental regulatory protein wetA (520 aa).

5 disordered regions span residues 49–72 (GDLP…NEWS), 104–165 (VPSR…MRSS), 236–295 (QSPS…WQSD), 367–453 (DHSF…GSNK), and 471–496 (LTGV…RRRK). Polar residues-rich tracts occupy residues 63 to 72 (SPQPWSNEWS), 104 to 114 (VPSRPTASHGL), and 155 to 165 (QSFSPSLMRSS). Low complexity predominate over residues 237–251 (SPSVSMPSPSIAMSA). Over residues 252–261 (RQQQHYIAQP) the composition is skewed to polar residues. Low complexity predominate over residues 262 to 295 (SSSSLTNSSPSSADDIFSSSHSSDPHSLSSWQSD). Residues 367–401 (DHSFSSSNMLPATPQKFDTSFNTSQVHNVSRSPSL) show a composition bias toward polar residues. Positions 420-429 (PTHRRTHSRK) are enriched in basic residues. Low complexity predominate over residues 436 to 453 (NAPKPAKASGSSSRGSNK).

It belongs to the wetA family.

BrlA, abaA and wetA are pivotal regulators of conidiophore development and conidium maturation. They act individually and together to regulate their own expression and that of numerous other sporulation-specific genes. Responsible for activating a set of genes whose products make up the final two conidial wall layers or direct their assembly and though this activity is responsible for acquisition of spore dormancy. The sequence is that of Developmental regulatory protein wetA from Penicillium rubens (strain ATCC 28089 / DSM 1075 / NRRL 1951 / Wisconsin 54-1255) (Penicillium chrysogenum).